A 147-amino-acid chain; its full sequence is Gastrin-releasing peptide (147 aa).

Positions 1–23 (MRGSELSLLLLALVLCQAPRGPA) are cleaved as a signal peptide. The residue at position 52 (Met52) is a Methionine amide. A propeptide spanning residues 56-147 (STDELPPLYA…VLKGKEGTAS (92 aa)) is cleaved from the precursor. A disordered region spans residues 95 to 123 (AGNRSHQPPQDQPLGSLQPTWDPEDGSYF). Over residues 98-113 (RSHQPPQDQPLGSLQP) the composition is skewed to polar residues.

It belongs to the bombesin/neuromedin-B/ranatensin family. In terms of tissue distribution, expressed in several dozen cells in the dorsal retrotrapezoid nucleus/parafacial respiratory group (at protein level).

The protein localises to the secreted. Its subcellular location is the cytoplasmic vesicle. It localises to the secretory vesicle lumen. It is found in the cell projection. The protein resides in the neuron projection. Functionally, stimulates the release of gastrin and other gastrointestinal hormones. Contributes to the perception of prurient stimuli and to the transmission of itch signals in the spinal cord that promote scratching behavior. Contributes primarily to nonhistaminergic itch sensation. In one study, shown to act in the amygdala as part of an inhibitory network which inhibits memory specifically related to learned fear. In another study, shown to act on vasoactive intestinal peptide (VIP)-expressing cells in the auditory cortex, most likely via extrasynaptic diffusion from local and long-range sources, to mediate disinhibition of glutamatergic cells via VIP cell-specific GRPR signaling which leads to enhanced auditory fear memories. Contributes to the regulation of food intake. Inhibits voltage-gated sodium channels but enhances voltage-gated potassium channels in hippocampal neurons. Induces sighing by acting directly on the pre-Botzinger complex, a cluster of several thousand neurons in the ventrolateral medulla responsible for inspiration during respiratory activity. Its function is as follows. Induces an itch response through activation of receptors present on mast cells, triggering mast cell degranulation. This is Gastrin-releasing peptide (Grp) from Rattus norvegicus (Rat).